The primary structure comprises 122 residues: Acidic phospholipase A2 BpirPLA2-I (122 aa).

Cystine bridges form between Cys-26–Cys-115, Cys-28–Cys-44, Cys-43–Cys-95, Cys-49–Cys-122, Cys-50–Cys-88, Cys-57–Cys-81, and Cys-75–Cys-86. Ca(2+)-binding residues include Tyr-27, Gly-29, and Gly-31. His-47 is a catalytic residue. Residue Asp-48 participates in Ca(2+) binding. Asp-89 is an active-site residue. The Antiplatelet activity signature appears at 105–117; sequence IKYWFYGAKNCQE.

The protein belongs to the phospholipase A2 family. Group II subfamily. D49 sub-subfamily. It depends on Ca(2+) as a cofactor. Expressed by the venom gland.

The protein localises to the secreted. It catalyses the reaction a 1,2-diacyl-sn-glycero-3-phosphocholine + H2O = a 1-acyl-sn-glycero-3-phosphocholine + a fatty acid + H(+). Inhibited by EDTA and p-bromophenacyl bromide (BPB). Its function is as follows. Snake venom phospholipase A2 (PLA2) that inhibits collagen/ADP-induced platelet aggregation, and induces hypotension in rats (activity abolished in the presence of p-bromophenacyl bromide). PLA2 catalyzes the calcium-dependent hydrolysis of the 2-acyl groups in 3-sn-phosphoglycerides. The sequence is that of Acidic phospholipase A2 BpirPLA2-I from Bothrops pirajai (Piraja's lancehead).